A 555-amino-acid chain; its full sequence is CTP synthase (555 aa).

Residues 1–271 (MVKRGKKTKY…DDKLAELFNI (271 aa)) form an amidoligase domain region. A CTP-binding site is contributed by S19. S19 is a binding site for UTP. Residues 20–25 (SLGKGL) and D77 contribute to the ATP site. Residues D77 and E145 each contribute to the Mg(2+) site. CTP is bound by residues 152–154 (DIE), 192–197 (KTKPTQ), and K228. UTP-binding positions include 192–197 (KTKPTQ) and K228. Residues 297 to 537 (RIGIVGKYVE…VKAALEHRDA (241 aa)) form the Glutamine amidotransferase type-1 domain. Residue G358 coordinates L-glutamine. The active-site Nucleophile; for glutamine hydrolysis is C385. L-glutamine contacts are provided by residues 386–389 (LGLQ), E409, and R466. Active-site residues include H510 and E512. The segment at 535–555 (RDAQQRQPPAEVKKLAVGKNG) is disordered.

It belongs to the CTP synthase family. As to quaternary structure, homotetramer.

The enzyme catalyses UTP + L-glutamine + ATP + H2O = CTP + L-glutamate + ADP + phosphate + 2 H(+). It carries out the reaction L-glutamine + H2O = L-glutamate + NH4(+). It catalyses the reaction UTP + NH4(+) + ATP = CTP + ADP + phosphate + 2 H(+). Its pathway is pyrimidine metabolism; CTP biosynthesis via de novo pathway; CTP from UDP: step 2/2. Its activity is regulated as follows. Allosterically activated by GTP, when glutamine is the substrate; GTP has no effect on the reaction when ammonia is the substrate. The allosteric effector GTP functions by stabilizing the protein conformation that binds the tetrahedral intermediate(s) formed during glutamine hydrolysis. Inhibited by the product CTP, via allosteric rather than competitive inhibition. Functionally, catalyzes the ATP-dependent amination of UTP to CTP with either L-glutamine or ammonia as the source of nitrogen. Regulates intracellular CTP levels through interactions with the four ribonucleotide triphosphates. The polypeptide is CTP synthase (Anaeromyxobacter sp. (strain K)).